The following is a 496-amino-acid chain: Transmembrane transporter swnT (496 aa).

5 helical membrane passes run 40 to 60 (LSAI…PLIL), 72 to 92 (VFWG…TLAE), 124 to 144 (AMIS…SVPL), 162 to 182 (WMGF…ACFE), and 191 to 211 (AFLL…FAMA). A glycan (N-linked (GlcNAc...) asparagine) is linked at Asn225. 6 helical membrane-spanning segments follow: residues 270 to 290 (LLWT…AVLV), 314 to 334 (AAAI…VWSI), 368 to 388 (PIWS…LYLA), 396 to 416 (LIAT…VLVL), 434 to 454 (GLVA…FYCF), and 467 to 487 (YVSG…ILYA).

Belongs to the amino acid-polyamine-organocation (APC) superfamily. Amino acid/choline transporter (ACT) (TC 2.A.3.4) family.

It is found in the membrane. Functionally, transmembrane transporter; part of the gene cluster that mediates the biosynthesis of swainsonine, a cytotoxic fungal alkaloid and a potential cancer therapy drug. Does not mediate the secretion of SW and the exact role of swnT in SW biosynthesis remains to be determined. This chain is Transmembrane transporter swnT, found in Metarhizium robertsii (strain ARSEF 23 / ATCC MYA-3075) (Metarhizium anisopliae (strain ARSEF 23)).